A 657-amino-acid chain; its full sequence is 1-deoxy-D-xylulose-5-phosphate synthase (657 aa).

Residues H73 and S113 to A115 contribute to the thiamine diphosphate site. Residue D145 coordinates Mg(2+). Thiamine diphosphate contacts are provided by residues G146–A147, N175, Y293, and E375. N175 is a binding site for Mg(2+).

This sequence belongs to the transketolase family. DXPS subfamily. Homodimer. It depends on Mg(2+) as a cofactor. Requires thiamine diphosphate as cofactor.

It catalyses the reaction D-glyceraldehyde 3-phosphate + pyruvate + H(+) = 1-deoxy-D-xylulose 5-phosphate + CO2. The protein operates within metabolic intermediate biosynthesis; 1-deoxy-D-xylulose 5-phosphate biosynthesis; 1-deoxy-D-xylulose 5-phosphate from D-glyceraldehyde 3-phosphate and pyruvate: step 1/1. In terms of biological role, catalyzes the acyloin condensation reaction between C atoms 2 and 3 of pyruvate and glyceraldehyde 3-phosphate to yield 1-deoxy-D-xylulose-5-phosphate (DXP). The sequence is that of 1-deoxy-D-xylulose-5-phosphate synthase from Pseudarthrobacter chlorophenolicus (strain ATCC 700700 / DSM 12829 / CIP 107037 / JCM 12360 / KCTC 9906 / NCIMB 13794 / A6) (Arthrobacter chlorophenolicus).